Reading from the N-terminus, the 120-residue chain is MVNLNPKRSDEPVWWGLFGAGGTWFAMLTPVTILVLGIMVPLGILDADAMSYERVSGFVTSFIGALFTIATLALPMWHAMHRLHHGMHDLKFHTGVVGKIACYATAFLVSALAIIFVFMI.

Transmembrane regions (helical) follow at residues 25-45, 57-77, and 100-120; these read FAMLTPVTILVLGIMVPLGIL, GFVTSFIGALFTIATLALPMW, and IACYATAFLVSALAIIFVFMI.

This sequence belongs to the FrdD family. Part of an enzyme complex containing four subunits: a flavoprotein (FrdA), an iron-sulfur protein (FrdB), and two hydrophobic anchor proteins (FrdC and FrdD).

It localises to the cell inner membrane. Anchors the catalytic components of the fumarate reductase complex to the cell membrane, binds quinones. The chain is Fumarate reductase subunit D from Photobacterium profundum (strain SS9).